Consider the following 226-residue polypeptide: UPF0111 protein HI_1603 (226 aa).

It belongs to the UPF0111 family.

This chain is UPF0111 protein HI_1603, found in Haemophilus influenzae (strain ATCC 51907 / DSM 11121 / KW20 / Rd).